Consider the following 473-residue polypeptide: MKHKIKHIHFVGIGGSGMGGIAEVLINQGFQISGSDLNGNSTTKRLQCLGAVIHHTHAAENIQSADAVVISTAIQPDNPEVIAARERRIPVVPRAMMLAELLRLHQGIAIAGTHGKTTTTSLVASILAEAGQDPTFVIGGRLKTVDSHARLGKGEFIVVEADESDASFLYLQPVLTVVTNIDADHMSTYEHDFNRLKQTFVEFIEHLPFYGMAVLCADDPHVSAIIPMVSKQVTTYGITSENAQIRATDIRHDQCKMHFCAHIGVNGSARTLDITLNLPGKHNVLNALAAIAVGNELNIPDEAMVKALATFGGVDRRFQQYGEIRLPDRRSFTLIDDYGHHPAEIAATMAAARNAFPGRRLVLVFQPHRYSRTRDLFEDFVRVLSSADALLLTEIYSAGEEPIIAADSKSLVRAIRVQGKIEPIYIEHINELKSAVHTVVQEGDVVLIMGAGSIGKIAPGLAEPTMKLTLITG.

Position 112–118 (112–118 (GTHGKTT)) interacts with ATP.

It belongs to the MurCDEF family.

The protein resides in the cytoplasm. The catalysed reaction is UDP-N-acetyl-alpha-D-muramate + L-alanine + ATP = UDP-N-acetyl-alpha-D-muramoyl-L-alanine + ADP + phosphate + H(+). It functions in the pathway cell wall biogenesis; peptidoglycan biosynthesis. Cell wall formation. This chain is UDP-N-acetylmuramate--L-alanine ligase, found in Nitrosomonas eutropha (strain DSM 101675 / C91 / Nm57).